A 295-amino-acid chain; its full sequence is Virginiamycin B lyase (295 aa).

His-227 contributes to the substrate binding site. Glu-267 is a binding site for Mg(2+). His-269 (proton acceptor) is an active-site residue. Residue Glu-284 participates in Mg(2+) binding.

It belongs to the Vgb family. In terms of assembly, monomer. Mg(2+) serves as cofactor.

Functionally, inactivates the type B streptogramin antibiotics by linearizing the lactone ring at the ester linkage, generating a free phenylglycine carboxylate and converting the threonyl moiety into 2-amino-butenoic acid. This chain is Virginiamycin B lyase, found in Bacillus licheniformis (strain ATCC 14580 / DSM 13 / JCM 2505 / CCUG 7422 / NBRC 12200 / NCIMB 9375 / NCTC 10341 / NRRL NRS-1264 / Gibson 46).